Consider the following 108-residue polypeptide: Cell wall protein PGA48 (108 aa).

An N-terminal signal peptide occupies residues 1–17; sequence MFKFVIYLFTFIAFANA. N-linked (GlcNAc...) asparagine glycans are attached at residues Asn-18, Asn-41, and Asn-77. Asn-84 carries GPI-anchor amidated asparagine lipidation. A propeptide spans 85 to 108 (removed in mature form); sequence GASKLNLRSLAGAGLVAAIFIAFI.

The protein belongs to the SED1 family. Post-translationally, the GPI-anchor is attached to the protein in the endoplasmic reticulum and serves to target the protein to the cell surface. There, the glucosamine-inositol phospholipid moiety is cleaved off and the GPI-modified mannoprotein is covalently attached via its lipidless GPI glycan remnant to the 1,6-beta-glucan of the outer cell wall layer.

The protein localises to the secreted. It localises to the cell wall. It is found in the membrane. Cell wall protein that plays a role in adaptation and resistance to cell wall stress. In Candida albicans (strain SC5314 / ATCC MYA-2876) (Yeast), this protein is Cell wall protein PGA48 (PGA48).